A 37-amino-acid chain; its full sequence is Unknown protein 25 (37 aa).

This is Unknown protein 25 from Pseudotsuga menziesii (Douglas-fir).